The primary structure comprises 394 residues: Mucosal addressin cell adhesion molecule 1 (394 aa).

The signal sequence occupies residues 1 to 19; it reads MEPILALLLALGPFQLSRG. Ig-like domains are found at residues 20–107, 108–225, and 256–345; these read QSFQ…ILVY, AFPD…TSPE, and PSTP…YVTG. Residues 20 to 353 lie on the Extracellular side of the membrane; that stretch reads QSFQVNPPEP…TGQVIPNPSS (334 aa). Asn-42 carries N-linked (GlcNAc...) asparagine glycosylation. Intrachain disulfides connect Cys-43/Cys-89, Cys-47/Cys-93, and Cys-130/Cys-198. Residues 219–255 form a mucin-like region; sequence QSQTSPEPPSTTSAKPYILTSSHTTKAVSTGLSSVAL. A disulfide bridge links Cys-282 with Cys-330. The helical transmembrane segment at 354-374 threads the bilayer; that stretch reads MVALWIGSLVLGLLALAFLAY. At 375-394 the chain is on the cytoplasmic side; that stretch reads CLWKRYRPGPLPDSSSCTLL.

As to quaternary structure, homodimer. In terms of tissue distribution, detected in Peyer patches and mesenteric lymph nodes but not in spleen.

The protein resides in the membrane. In terms of biological role, cell adhesion leukocyte receptor expressed by mucosal venules, helps to direct lymphocyte traffic into mucosal tissues including the Peyer patches and the intestinal lamina propria. It can bind both the integrin alpha-4/beta-7 and L-selectin, regulating both the passage and retention of leukocytes. The polypeptide is Mucosal addressin cell adhesion molecule 1 (Madcam1) (Rattus norvegicus (Rat)).